The following is a 352-amino-acid chain: Macrophage-capping protein (352 aa).

Methionine 1 is modified (N-acetylmethionine). The stretch at glutamate 27–glycine 75 is one Gelsolin-like 1 repeat. The short motif at arginine 139 to lysine 148 is the Nuclear localization signal element. Gelsolin-like repeat units follow at residues isoleucine 150 to asparagine 190 and methionine 265 to glutamine 311. Serine 341 carries the phosphoserine modification.

The protein belongs to the villin/gelsolin family. As to quaternary structure, interacts with NUP62. Interacts with NUTF2 and RAN; involved in CAPG nuclear import. Phosphorylated. Nuclear GCAP39 is more highly phosphorylated than cytoplasmic GCAP39. As to expression, present in a large variety of tissues and is particularly abundant in kidney and lung. Highly expressed in macrophages (at protein level).

It localises to the nucleus. Its subcellular location is the cytoplasm. It is found in the melanosome. The protein localises to the cell projection. The protein resides in the lamellipodium. It localises to the ruffle. Functionally, calcium-sensitive protein which reversibly blocks the barbed ends of actin filaments but does not sever preformed actin filaments. May play an important role in macrophage function. May play a role in regulating cytoplasmic and/or nuclear structures through potential interactions with actin. May bind DNA. Uncapping occurs either when Ca(2+) falls or when the concentration of polyphosphoinositide rises, both at low and high Ca(2+). The sequence is that of Macrophage-capping protein (Capg) from Mus musculus (Mouse).